Reading from the N-terminus, the 256-residue chain is Major prion protein (256 aa).

The first 24 residues, 1–24, serve as a signal peptide directing secretion; the sequence is MVKSHIGSWILVLFVAMWSDVGLC. Positions 25–233 are interaction with GRB2, ERI3 and SYN1; the sequence is KKRPKPGGGW…ESQAYYQRGA (209 aa). Positions 28 to 110 are disordered; the sequence is PKPGGGWNTG…QWNKPSKPKT (83 aa). A run of 5 repeats spans residues 54–62, 63–70, 71–78, 79–86, and 87–95. The 5 X 8 AA tandem repeats of P-H-G-G-G-W-G-Q stretch occupies residues 54 to 95; the sequence is PQGAGGWGQPHGGGWGQPHGGGWGQPHGGGWGQPHGGGGWGQ. The segment covering 56-97 has biased composition (gly residues); that stretch reads GAGGWGQPHGGGWGQPHGGGWGQPHGGGWGQPHGGGGWGQGG. His-64, Gly-65, Gly-66, His-72, Gly-73, Gly-74, His-80, Gly-81, Gly-82, His-88, Gly-90, and Gly-91 together coordinate Cu(2+). Cysteines 182 and 217 form a disulfide. Asn-184 and Asn-200 each carry an N-linked (GlcNAc...) asparagine glycan. Ala-233 is lipidated: GPI-anchor amidated alanine. Positions 234–256 are cleaved as a propeptide — removed in mature form; that stretch reads SVILFSSPPVILLISFLIFLIVG.

The protein belongs to the prion family. In terms of assembly, monomer and homodimer. Has a tendency to aggregate into amyloid fibrils containing a cross-beta spine, formed by a steric zipper of superposed beta-strands. Soluble oligomers may represent an intermediate stage on the path to fibril formation. Copper binding may promote oligomerization. Interacts with GRB2, APP, ERI3/PRNPIP and SYN1. Mislocalized cytosolically exposed PrP interacts with MGRN1; this interaction alters MGRN1 subcellular location and causes lysosomal enlargement. Interacts with KIAA1191.

The protein resides in the cell membrane. It localises to the golgi apparatus. Its primary physiological function is unclear. Has cytoprotective activity against internal or environmental stresses. May play a role in neuronal development and synaptic plasticity. May be required for neuronal myelin sheath maintenance. May play a role in iron uptake and iron homeostasis. Soluble oligomers are toxic to cultured neuroblastoma cells and induce apoptosis (in vitro). Association with GPC1 (via its heparan sulfate chains) targets PRNP to lipid rafts. Also provides Cu(2+) or Zn(2+) for the ascorbate-mediated GPC1 deaminase degradation of its heparan sulfate side chains. This chain is Major prion protein (PRNP), found in Moschus chrysogaster (Alpine musk deer).